We begin with the raw amino-acid sequence, 342 residues long: Serine/threonine-protein kinase-transforming protein mos (342 aa).

The Protein kinase domain occupies valine 63–arginine 338. Residues leucine 69 to valine 77 and lysine 90 each bind ATP. Residue aspartate 198 is the Proton acceptor of the active site.

This sequence belongs to the protein kinase superfamily. Ser/Thr protein kinase family.

It catalyses the reaction L-seryl-[protein] + ATP = O-phospho-L-seryl-[protein] + ADP + H(+). The enzyme catalyses L-threonyl-[protein] + ATP = O-phospho-L-threonyl-[protein] + ADP + H(+). This chain is Serine/threonine-protein kinase-transforming protein mos (V-MOS), found in Myeloproliferative sarcoma virus (isolate ts159).